The following is a 327-amino-acid chain: Glycolipid sulfotransferase BCG_1434 (327 aa).

3'-phosphoadenylyl sulfate is bound at residue 40–45 (KSGLTW). The active-site Proton acceptor is His97. 116–124 (RDPRDAAVS) serves as a coordination point for 3'-phosphoadenylyl sulfate.

This sequence belongs to the sulfotransferase 1 family.

Its function is as follows. Involved in the synthesis of cell wall sulfolipids. This chain is Glycolipid sulfotransferase BCG_1434, found in Mycobacterium bovis (strain BCG / Pasteur 1173P2).